A 102-amino-acid polypeptide reads, in one-letter code: Putative pterin-4-alpha-carbinolamine dehydratase (102 aa).

It belongs to the pterin-4-alpha-carbinolamine dehydratase family.

The catalysed reaction is (4aS,6R)-4a-hydroxy-L-erythro-5,6,7,8-tetrahydrobiopterin = (6R)-L-erythro-6,7-dihydrobiopterin + H2O. The chain is Putative pterin-4-alpha-carbinolamine dehydratase from Psychromonas ingrahamii (strain DSM 17664 / CCUG 51855 / 37).